The primary structure comprises 237 residues: RNA polymerase sigma-28 factor (237 aa).

Residues 1–19 constitute a propeptide that is removed on maturation; the sequence is MSLFAAIGYMVREVFVFVS. Positions 77 to 90 match the Polymerase core binding motif; sequence DLISIGTIGLIKAI. Residues 197–206 constitute a DNA-binding region (H-T-H motif); that stretch reads QREIAKALGI.

It belongs to the sigma-70 factor family. Proteolytically cleaved in the N-terminus probably by a SpoIIGA homolog to yield the active peptide.

Functionally, sigma factors are initiation factors that promote the attachment of RNA polymerase to specific initiation sites and are then released. This sigma factor directs the transcription of crystal protein genes, a sporulation-regulated event. The chain is RNA polymerase sigma-28 factor (sigK) from Bacillus thuringiensis subsp. kurstaki.